We begin with the raw amino-acid sequence, 325 residues long: Tetraacyldisaccharide 4'-kinase (325 aa).

55-62 (TAGGNGKT) contacts ATP.

This sequence belongs to the LpxK family.

It carries out the reaction a lipid A disaccharide + ATP = a lipid IVA + ADP + H(+). It participates in glycolipid biosynthesis; lipid IV(A) biosynthesis; lipid IV(A) from (3R)-3-hydroxytetradecanoyl-[acyl-carrier-protein] and UDP-N-acetyl-alpha-D-glucosamine: step 6/6. Transfers the gamma-phosphate of ATP to the 4'-position of a tetraacyldisaccharide 1-phosphate intermediate (termed DS-1-P) to form tetraacyldisaccharide 1,4'-bis-phosphate (lipid IVA). The polypeptide is Tetraacyldisaccharide 4'-kinase (Salmonella paratyphi B (strain ATCC BAA-1250 / SPB7)).